Here is a 224-residue protein sequence, read N- to C-terminus: Retinoschisin (224 aa).

A signal peptide spans methionine 1–serine 23. The F5/8 type C domain occupies cysteine 63 to cysteine 219. 2 disulfides stabilise this stretch: cysteine 63–cysteine 219 and cysteine 110–cysteine 142.

In terms of assembly, homooctamer of 4 homodimers; disulfide-linked. The homooctamer has a flat, cogwheel structure with a diameter of about 14 nm. Two stacked octamers can assemble to form a hexadecamer. Detected in the eye cup. Detected in retina, in the inner segment of the photoreceptors, the inner nuclear layer, the inner plexiform layer and the ganglion cell layer (at protein level). Restricted to the retina. At the mRNA level, detected only within the photoreceptor cell layer, most prominently within the inner segments of the photoreceptors. Undetectable in the inner plexiform layers and the inner nuclear layer.

It is found in the secreted. The protein resides in the cell membrane. Functionally, binds negatively charged membrane lipids, such as phosphatidylserine and phosphoinositides. May play a role in cell-cell adhesion processes in the retina, via homomeric interaction between octamers present on the surface of two neighboring cells. Required for normal structure and function of the retina. The protein is Retinoschisin (Rs1) of Mus musculus (Mouse).